The primary structure comprises 911 residues: Chitin synthase G (911 aa).

2 disordered regions span residues 1 to 66 (MAYQ…VSGY) and 107 to 138 (GRVASPYARSDTSSTEAWRQRQAPGGGPGGLR). The span at 12–34 (PHYDDNGHRLQDLPHGSYEEEAS) shows a compositional bias: basic and acidic residues. Positions 54–66 (QHGSSTTRPVSGY) are enriched in polar residues. Transmembrane regions (helical) follow at residues 579 to 599 (IFSTVLTWFSLASYWLTTTVI), 624 to 644 (IINTIVKYVYLGFLLLQFILA), 659 to 679 (SFVVFGIIQVYVVIDALYLVV), 711 to 731 (IIIIALAATFGLYFVASFMYL), 840 to 860 (LVTFWIFSNAFLAVCITSDGV), and 879 to 899 (ALLWSNAVVALFRFIGACWFL).

The protein belongs to the chitin synthase family. Class III subfamily.

Its subcellular location is the cell membrane. The catalysed reaction is [(1-&gt;4)-N-acetyl-beta-D-glucosaminyl](n) + UDP-N-acetyl-alpha-D-glucosamine = [(1-&gt;4)-N-acetyl-beta-D-glucosaminyl](n+1) + UDP + H(+). Polymerizes chitin, a structural polymer of the cell wall and septum, by transferring the sugar moiety of UDP-GlcNAc to the non-reducing end of the growing chitin polymer. The sequence is that of Chitin synthase G (chsG) from Aspergillus fumigatus (strain ATCC MYA-4609 / CBS 101355 / FGSC A1100 / Af293) (Neosartorya fumigata).